Reading from the N-terminus, the 232-residue chain is Ribonuclease 3 (232 aa).

The RNase III domain occupies 5–134; sequence QTVLKNHFAI…FLGALLLDKD (130 aa). Residue E47 participates in Mg(2+) binding. Residue D51 is part of the active site. Positions 120 and 123 each coordinate Mg(2+). Residue E123 is part of the active site. The DRBM domain occupies 160-229; that stretch reads DYKTHLQELL…AKNAVEKGLD (70 aa).

The protein belongs to the ribonuclease III family. As to quaternary structure, homodimer. The cofactor is Mg(2+).

The protein resides in the cytoplasm. It catalyses the reaction Endonucleolytic cleavage to 5'-phosphomonoester.. Its function is as follows. Digests double-stranded RNA. Involved in the processing of primary rRNA transcript to yield the immediate precursors to the large and small rRNAs (23S and 16S). Processes some mRNAs, and tRNAs when they are encoded in the rRNA operon. Processes pre-crRNA and tracrRNA of type II CRISPR loci if present in the organism. The sequence is that of Ribonuclease 3 from Streptococcus pneumoniae (strain Taiwan19F-14).